Here is a 364-residue protein sequence, read N- to C-terminus: Aminomethyltransferase (364 aa).

The protein belongs to the GcvT family. In terms of assembly, the glycine cleavage system is composed of four proteins: P, T, L and H.

It carries out the reaction N(6)-[(R)-S(8)-aminomethyldihydrolipoyl]-L-lysyl-[protein] + (6S)-5,6,7,8-tetrahydrofolate = N(6)-[(R)-dihydrolipoyl]-L-lysyl-[protein] + (6R)-5,10-methylene-5,6,7,8-tetrahydrofolate + NH4(+). Functionally, the glycine cleavage system catalyzes the degradation of glycine. This is Aminomethyltransferase from Escherichia coli O157:H7.